The following is a 393-amino-acid chain: Demethylspheroidene O-methyltransferase (393 aa).

The disordered stretch occupies residues 1-36; sequence MPKDDHTGATADRTAQPTGTGKQPLVPGQPGAAPVQ. Over residues 26–36 the composition is skewed to low complexity; it reads VPGQPGAAPVQ. S-adenosyl-L-methionine is bound by residues Asp-259 and Arg-297.

Belongs to the class I-like SAM-binding methyltransferase superfamily. Cation-independent O-methyltransferase family.

The catalysed reaction is demethylspheroidene + S-adenosyl-L-methionine = spheroidene + S-adenosyl-L-homocysteine + H(+). It functions in the pathway carotenoid biosynthesis; spheroidene biosynthesis. Its function is as follows. Methyltransferase that mediates the O-methylation of 1-hydroxy carotenoids. Converts hydroxyneurosporene to methoxyneurosporene or demethylspheroidene to spheroidene. Also able to produce spirilloxanthin. This Rhodobacter capsulatus (strain ATCC BAA-309 / NBRC 16581 / SB1003) protein is Demethylspheroidene O-methyltransferase (crtF).